A 125-amino-acid polypeptide reads, in one-letter code: MAKLTNEDILNAIADMSVMNVVELVSAMEEKFGVSAAPVAAPPVVADTIDDVVVEKDEFDVMLTSFGKKKVAVIKMARSITGLGLKEAKDMVESAPVVIKEGASKVEAEDIQKQLEEAGASVELK.

Belongs to the bacterial ribosomal protein bL12 family. In terms of assembly, homodimer. Part of the ribosomal stalk of the 50S ribosomal subunit. Forms a multimeric L10(L12)X complex, where L10 forms an elongated spine to which 2 to 4 L12 dimers bind in a sequential fashion. Binds GTP-bound translation factors.

Forms part of the ribosomal stalk which helps the ribosome interact with GTP-bound translation factors. Is thus essential for accurate translation. This Ruthia magnifica subsp. Calyptogena magnifica protein is Large ribosomal subunit protein bL12.